Reading from the N-terminus, the 329-residue chain is Phenylalanine--tRNA ligase alpha subunit (329 aa).

Mg(2+) is bound at residue E253.

Belongs to the class-II aminoacyl-tRNA synthetase family. Phe-tRNA synthetase alpha subunit type 1 subfamily. As to quaternary structure, tetramer of two alpha and two beta subunits. The cofactor is Mg(2+).

It is found in the cytoplasm. It catalyses the reaction tRNA(Phe) + L-phenylalanine + ATP = L-phenylalanyl-tRNA(Phe) + AMP + diphosphate + H(+). The chain is Phenylalanine--tRNA ligase alpha subunit from Teredinibacter turnerae (strain ATCC 39867 / T7901).